The primary structure comprises 1025 residues: Myosin phosphatase Rho-interacting protein (1025 aa).

The tract at residues 2-383 (SAAKENPCRK…DRRSTEPSVT (382 aa)) is interaction with F-actin. Residues 43 to 150 (KPIYGGWLLL…WLEMLMVYPR (108 aa)) enclose the PH 1 domain. Disordered regions lie at residues 152 to 302 (NKQN…RRSQ) and 317 to 383 (HMET…PSVT). Positions 179-189 (SSSSSSSSSSS) are enriched in low complexity. 6 positions are modified to phosphoserine: Ser-192, Ser-217, Ser-218, Ser-220, Ser-224, and Ser-226. A compositionally biased stretch (low complexity) spans 217–236 (SSLSPAQSPSQSQPPAASSL). The segment covering 239 to 263 (PGLESKEEESAMSSDRMDCGRKVRV) has biased composition (basic and acidic residues). Residues Ser-265 and Ser-269 each carry the phosphoserine modification. The span at 271–281 (EKTKQDLKAEE) shows a compositional bias: basic and acidic residues. A compositionally biased stretch (pro residues) spans 284-294 (LPPPLSPPSPS). Residues Ser-289 and Ser-292 each carry the phosphoserine modification. Thr-295 bears the Phosphothreonine mark. At Ser-326 the chain carries Phosphoserine. The segment covering 332–348 (RQGRSEKRAFPRKRDFT) has biased composition (basic and acidic residues). Thr-348 is modified (phosphothreonine). Phosphoserine occurs at positions 362 and 365. One can recognise a PH 2 domain in the interval 387–483 (LNFKKGWLTK…WIQTIMKHVH (97 aa)). Disordered stretches follow at residues 485 to 545 (TTAP…TFDW) and 560 to 591 (VGGV…RREE). Position 493 is a phosphoserine (Ser-493). Basic and acidic residues-rich tracts occupy residues 524-545 (PEQK…TFDW) and 567-589 (DTHE…ARRR). The tract at residues 546–824 (AEFRPIQQAL…SVQRELEVLS (279 aa)) is interaction with RHOA. At Ser-619 the chain carries Phosphoserine. Thr-646 carries the phosphothreonine modification. Ser-663 and Ser-800 each carry phosphoserine. Positions 673–977 (HELTSLLEKE…AATEALGEKS (305 aa)) form a coiled coil. The interaction with PPP1R12A stretch occupies residues 824–879 (SEQYSQKCLENAHLAQALEAERQALRQCQRENQELNAHNQELNNRLAAEITRLRTL). Phosphoserine is present on residues Ser-891, Ser-977, Ser-993, Ser-1014, and Ser-1016.

Binds F-actin through its N-terminus. Interacts with MYZAP. Binds RHOA, PPP1R12A/MBS and PPP1R12C/MBS85 through adjacent coiled coil domains.

It localises to the cytoplasm. The protein localises to the cytoskeleton. Functionally, targets myosin phosphatase to the actin cytoskeleton. Required for the regulation of the actin cytoskeleton by RhoA and ROCK1. Depletion leads to an increased number of stress fibers in smooth muscle cells through stabilization of actin fibers by phosphorylated myosin. Overexpression of MRIP as well as its F-actin-binding region leads to disassembly of stress fibers in neuronal cells. This Homo sapiens (Human) protein is Myosin phosphatase Rho-interacting protein (MPRIP).